Reading from the N-terminus, the 369-residue chain is Signal recognition particle receptor FtsY (369 aa).

Residues 20–42 are compositionally biased toward basic and acidic residues; that stretch reads GEENKKEPETRQTDQLESKKEET. Residues 20-58 form a disordered region; that stretch reads GEENKKEPETRQTDQLESKKEETIQQQQNVQQPQAENKI. Low complexity predominate over residues 44 to 53; that stretch reads QQQQNVQQPQ. Residues 180–187, 262–266, and 320–323 contribute to the GTP site; these read GVNGVGKT, DTAGR, and TKVD.

It belongs to the GTP-binding SRP family. FtsY subfamily. As to quaternary structure, part of the signal recognition particle protein translocation system, which is composed of SRP and FtsY.

The protein resides in the cell membrane. Its subcellular location is the cytoplasm. The enzyme catalyses GTP + H2O = GDP + phosphate + H(+). Functionally, involved in targeting and insertion of nascent membrane proteins into the cytoplasmic membrane. Acts as a receptor for the complex formed by the signal recognition particle (SRP) and the ribosome-nascent chain (RNC). The chain is Signal recognition particle receptor FtsY from Sulfolobus acidocaldarius (strain ATCC 33909 / DSM 639 / JCM 8929 / NBRC 15157 / NCIMB 11770).